Here is a 1311-residue protein sequence, read N- to C-terminus: AF4/FMR2 family member 2 (1311 aa).

Disordered stretches follow at residues 94-187, 204-229, and 377-417; these read LVGI…LTQD, PQIG…GEDA, and TAGH…TKSV. The span at 101 to 111 shows a compositional bias: polar residues; sequence SVPQNPNNKNE. Residues 155-164 show a composition bias toward basic and acidic residues; it reads SKPEWSRDSH. A compositionally biased stretch (polar residues) spans 165 to 187; the sequence is NPSTVLASQASGQPNKMQTLTQD. 2 stretches are compositionally biased toward polar residues: residues 377 to 396 and 403 to 417; these read TAGH…SQHL and QKWN…TKSV. Ser-430 is modified (phosphoserine). 4 disordered regions span residues 457–530, 574–726, 818–867, and 881–943; these read KAKP…KWQL, TNAS…DQEE, SLHA…IPEK, and PPCI…DKNI. Positions 465–477 are enriched in pro residues; it reads VNPPLATPQPPPA. The span at 478 to 491 shows a compositional bias: low complexity; the sequence is VQASGGSGSSSESE. The residue at position 517 (Thr-517) is a Phosphothreonine. Positions 582–597 are enriched in basic and acidic residues; that stretch reads EPKERPLLSLIREKAR. Over residues 615-625 the composition is skewed to polar residues; it reads STTSETVSQRT. Basic and acidic residues predominate over residues 655 to 668; the sequence is PKEKESVELHDPPR. Basic residues predominate over residues 669–679; the sequence is GRNKATAHKPA. Residues 857–867 are compositionally biased toward basic and acidic residues; sequence PIEVAEKIPEK. 2 stretches are compositionally biased toward pro residues: residues 883 to 892 and 913 to 922; these read CISPAPPHKP and FPPPLSPLPE.

This sequence belongs to the AF4 family. As to expression, brain (most abundant in hippocampus and amygdala), placenta and lung.

The protein resides in the nucleus speckle. In terms of biological role, RNA-binding protein. Might be involved in alternative splicing regulation through an interaction with G-quartet RNA structure. The polypeptide is AF4/FMR2 family member 2 (Homo sapiens (Human)).